The primary structure comprises 59 residues: Large ribosomal subunit protein uL30 (59 aa).

This sequence belongs to the universal ribosomal protein uL30 family. Part of the 50S ribosomal subunit.

In Sodalis glossinidius (strain morsitans), this protein is Large ribosomal subunit protein uL30.